We begin with the raw amino-acid sequence, 433 residues long: Malate synthase (433 aa).

16–17 (TS) serves as a coordination point for acetyl-CoA. Aspartate 52 contacts Mg(2+). Arginine 84 is an acetyl-CoA binding site. Glyoxylate is bound by residues arginine 84, glutamate 158, and 191–192 (VD). Positions 158 and 192 each coordinate Mg(2+). Acetyl-CoA-binding residues include arginine 236 and leucine 259. Residue aspartate 388 is the Proton acceptor of the active site.

Belongs to the HpcH/HpaI aldolase family. Homotrimer and homohexamer in equilibrium. It depends on Mg(2+) as a cofactor.

Its subcellular location is the cytoplasm. It catalyses the reaction glyoxylate + acetyl-CoA + H2O = (S)-malate + CoA + H(+). It functions in the pathway carbohydrate metabolism; glyoxylate cycle; (S)-malate from isocitrate: step 2/2. Functionally, involved in the glyoxylate cycle which synthesizes precursors for carbohydrates from C2 compounds such as acetate. Catalyzes the Claisen condensation between acetyl-coenzyme A (acetyl-CoA) and glyoxylate to form the malyl-CoA intermediate that is subsequently hydrolyzed to produce malate and CoA. The chain is Malate synthase (aceB) from Haloferax volcanii (strain ATCC 29605 / DSM 3757 / JCM 8879 / NBRC 14742 / NCIMB 2012 / VKM B-1768 / DS2) (Halobacterium volcanii).